We begin with the raw amino-acid sequence, 266 residues long: MQGSTRRAGAMTDVHRRFLQLLMTHGVLEEWEVRRLQNHCYKVHDRNATVDKLEDFINNINSVLESLYIEIKKGITEDDGRPIYALVNLATTSVSKMATDFAENELDLFRKALELIVDSETGFASSTNILNLVDQLKGKKMRKKEAEQVLQKFVQSKWLIEKEGEFTLHGRAILEMEQFIRESYPDAVKMCNICHSLLIQGQSCETCGIRMHLPCVAKYFQSTAEPRCPHCNDYWPHDIPEVFDPEKEREAGISKSSRKSLRTRQH.

An interaction with NSMCE3 region spans residues 1–102; sequence MQGSTRRAGA…SVSKMATDFA (102 aa). Residues 191–232 form an RING-type; atypical zinc finger; sequence CNICHSLLIQGQSCETCGIRMHLPCVAKYFQSTAEPRCPHCN. The disordered stretch occupies residues 246-266; it reads EKEREAGISKSSRKSLRTRQH. The segment covering 256 to 266 has biased composition (basic residues); it reads SSRKSLRTRQH.

It belongs to the NSE1 family. Component of the SMC5-SMC6 complex which consists at least of SMC5, SMC6, NSMCE2, NSMCE1, NSMCE4A or EID3 and NSMCE3. NSMCE1, NSMCE4A or EID3 and NSMCE3 probably form a subcomplex that bridges the head domains of the SMC5-SMC6 heterodimer. Interacts with NSMCE3. Ubiquitinated.

It localises to the nucleus. The protein resides in the chromosome. It is found in the telomere. It carries out the reaction S-ubiquitinyl-[E2 ubiquitin-conjugating enzyme]-L-cysteine + [acceptor protein]-L-lysine = [E2 ubiquitin-conjugating enzyme]-L-cysteine + N(6)-ubiquitinyl-[acceptor protein]-L-lysine.. Functionally, RING-type zinc finger-containing E3 ubiquitin ligase that assembles with melanoma antigen protein (MAGE) to catalyze the direct transfer of ubiquitin from E2 ubiquitin-conjugating enzyme to a specific substrate. Within MAGE-RING ubiquitin ligase complex, MAGE stimulates and specifies ubiquitin ligase activity likely through recruitment and/or stabilization of the E2 ubiquitin-conjugating enzyme at the E3:substrate complex. Involved in maintenance of genome integrity, DNA damage response and DNA repair. NSMCE3/MAGEG1 and NSMCE1 ubiquitin ligase are components of SMC5-SMC6 complex and may positively regulate homologous recombination-mediated DNA repair. The polypeptide is Non-structural maintenance of chromosomes element 1 homolog (Nsmce1) (Rattus norvegicus (Rat)).